Here is a 363-residue protein sequence, read N- to C-terminus: Protein-glutamate methylesterase/protein-glutamine glutaminase 1 (363 aa).

The 118-residue stretch at 7-124 folds into the Response regulatory domain; the sequence is KVLIVDDSAL…SRGMQEYARE (118 aa). Aspartate 58 is subject to 4-aspartylphosphate. Residues 164–356 enclose the CheB-type methylesterase domain; it reads FSSTEKIIVI…RRLFGWLESQ (193 aa). Residues serine 176, histidine 202, and aspartate 298 contribute to the active site.

Belongs to the CheB family. Post-translationally, phosphorylated by CheA. Phosphorylation of the N-terminal regulatory domain activates the methylesterase activity.

The protein localises to the cytoplasm. The catalysed reaction is [protein]-L-glutamate 5-O-methyl ester + H2O = L-glutamyl-[protein] + methanol + H(+). It catalyses the reaction L-glutaminyl-[protein] + H2O = L-glutamyl-[protein] + NH4(+). In terms of biological role, involved in chemotaxis. Part of a chemotaxis signal transduction system that modulates chemotaxis in response to various stimuli. Catalyzes the demethylation of specific methylglutamate residues introduced into the chemoreceptors (methyl-accepting chemotaxis proteins or MCP) by CheR. Also mediates the irreversible deamidation of specific glutamine residues to glutamic acid. This is Protein-glutamate methylesterase/protein-glutamine glutaminase 1 from Geobacter metallireducens (strain ATCC 53774 / DSM 7210 / GS-15).